Consider the following 181-residue polypeptide: Ras-like protein 1 (181 aa).

GTP is bound at residue 10–17; the sequence is GAGGVGKS. Residues 32–40 carry the Effector region motif; the sequence is YDPTIEDSY. GTP-binding positions include 57–61 and 116–119; these read DTAGQ and NKCD. Residue Cys-178 is modified to Cysteine methyl ester. The S-geranylgeranyl cysteine moiety is linked to residue Cys-178. Residues 179–181 constitute a propeptide, removed in mature form; that stretch reads KML.

Belongs to the small GTPase superfamily. Ras family.

Its subcellular location is the cell membrane. The enzyme catalyses GTP + H2O = GDP + phosphate + H(+). With respect to regulation, alternates between an inactive form bound to GDP and an active form bound to GTP. Activated by a guanine nucleotide-exchange factor (GEF) and inactivated by a GTPase-activating protein (GAP). In terms of biological role, ras proteins bind GDP/GTP and possess intrinsic GTPase activity. Plays a role in eye development by regulating cell growth, survival of postmitotic ommatidial cells and differentiation of photoreceptor cells. During larval development, mediates Ptth/tor signaling leading to the production of ecdysone, a hormone required for the initiation of metamorphosis. The polypeptide is Ras-like protein 1 (Drosophila mojavensis (Fruit fly)).